Reading from the N-terminus, the 216-residue chain is Refilin-B (216 aa).

The segment at 1 to 55 (MVGRLSLQDVPELVDTKKKGDGVLDSPDSGLPPSPSPSHWGLAATAGGGGERAPV) is disordered. A phosphoserine mark is found at Ser6 and Ser26.

This sequence belongs to the Refilin family. Interacts with FLNA and FLNB. As to expression, detected in various tissues, with highest expression in lung, followed by spleen.

The protein resides in the cytoplasm. The protein localises to the cytoskeleton. In terms of biological role, involved in the regulation of the perinuclear actin network and nuclear shape through interaction with filamins. Plays an essential role in the formation of cartilaginous skeletal elements. The polypeptide is Refilin-B (Mus musculus (Mouse)).